The following is a 103-amino-acid chain: UPF0145 protein CYB_1351 (103 aa).

It belongs to the UPF0145 family.

The polypeptide is UPF0145 protein CYB_1351 (Synechococcus sp. (strain JA-2-3B'a(2-13)) (Cyanobacteria bacterium Yellowstone B-Prime)).